The following is a 230-amino-acid chain: Protein STK_02290 (230 aa).

Residues 15–213 (NLGKVLIKIA…EEKPKSEKIL (199 aa)) enclose the AMMECR1 domain.

In Sulfurisphaera tokodaii (strain DSM 16993 / JCM 10545 / NBRC 100140 / 7) (Sulfolobus tokodaii), this protein is Protein STK_02290.